A 197-amino-acid chain; its full sequence is Ion-translocating oxidoreductase complex subunit B (197 aa).

The interval 1–26 is hydrophobic; it reads MSTILIAIIALAVLAAVFGAILGFAS. Positions 32–90 constitute a 4Fe-4S domain; it reads EADPIVDQIDTILPQTQCGQCGYPGCRPYAEAIANGDKINKCPPGGQATIEKLADLMGV. Residues C49, C52, C57, C73, C114, C117, C120, C124, C144, C147, C150, and C154 each coordinate [4Fe-4S] cluster. 4Fe-4S ferredoxin-type domains lie at 105-134 and 135-164; these read TVAF…GGTK and ALHT…MIPV.

This sequence belongs to the 4Fe4S bacterial-type ferredoxin family. RnfB subfamily. In terms of assembly, the complex is composed of six subunits: RnfA, RnfB, RnfC, RnfD, RnfE and RnfG. It depends on [4Fe-4S] cluster as a cofactor.

It localises to the cell inner membrane. Its function is as follows. Part of a membrane-bound complex that couples electron transfer with translocation of ions across the membrane. This chain is Ion-translocating oxidoreductase complex subunit B, found in Vibrio atlanticus (strain LGP32) (Vibrio splendidus (strain Mel32)).